The primary structure comprises 1907 residues: Chromatin modification-related protein EAF1 B (1907 aa).

Disordered regions lie at residues 108–208, 261–287, 323–373, and 449–469; these read ASPH…TDLV, NRVS…GSKT, GGSP…SHAN, and NQSH…ETEK. Basic and acidic residues predominate over residues 140–151; it reads SENKSVEGERNL. 3 stretches are compositionally biased toward polar residues: residues 261–270, 333–342, and 355–372; these read NRVSSNSLNT, GQKNSSTQLN, and TNRG…SSHA. An HSA domain is found at 563-641; the sequence is CGTAPVEVRE…LSYAILQFWS (79 aa). Disordered regions lie at residues 836 to 909 and 928 to 952; these read SSSL…AVQK and AETS…TWHL. A compositionally biased stretch (basic residues) spans 856–866; that stretch reads RRVRTASRHRV. 2 stretches are compositionally biased toward polar residues: residues 884 to 898 and 942 to 952; these read TDAS…QDEY and QGSAYDQTWHL. The region spanning 1049-1105 is the SANT domain; that stretch reads SGNPWSLFEDQALVVLVHDMGPNWELISDAMNSTLKIKYIYRNPTECKDRHKILMDK. 8 disordered regions span residues 1107-1131, 1235-1266, 1296-1319, 1429-1465, 1477-1594, 1638-1703, 1767-1791, and 1824-1907; these read AGDG…PGIP, PVLP…GLQS, LSGR…DRGH, GHLS…QQEA, YLQQ…QQLN, VRPD…SPAT, VPQS…QASN, and VNNS…TKVE. 5 stretches are compositionally biased toward polar residues: residues 1116-1125, 1242-1266, 1296-1310, 1431-1444, and 1453-1462; these read DSGNSQSYPS, AHPS…GLQS, LSGR…STPA, LSQQ…SHVL, and QSPSQATGAQ. The span at 1493 to 1512 shows a compositional bias: low complexity; the sequence is PHVQQPQGSSVSSSSQNSPQ. The segment covering 1513 to 1529 has biased composition (pro residues); sequence TQPPVSPQPLSMPPVSP. Polar residues-rich tracts occupy residues 1532 to 1545, 1554 to 1568, 1585 to 1594, 1640 to 1655, 1662 to 1672, 1681 to 1703, 1769 to 1782, and 1824 to 1844; these read NINA…QKSQ, SPQS…QAGK, RQPTQGQQLN, PDQQ…TDLQ, PLSSNHSQQLP, PSPQ…SPAT, QSVT…SMGT, and VNNS…NQGL. Composition is skewed to basic and acidic residues over residues 1863-1872 and 1882-1892; these read SEEKRPKLPE and LASEEQPHLEE.

Belongs to the EAF1 family. As to quaternary structure, component of the NuA4 histone acetyltransferase complex. Interacts with ARP4 and SWC4, and (via HSA domain) with TAF14 and TAF14B. Expressed in leaves.

It is found in the nucleus. In terms of biological role, component of the NuA4 histone acetyltransferase complex which is involved in transcriptional activation of selected genes principally by acetylation of nucleosomal histone H4 and H2A. The chain is Chromatin modification-related protein EAF1 B (EAF1B) from Arabidopsis thaliana (Mouse-ear cress).